The primary structure comprises 494 residues: Tetracenomycin biosynthesis bifunctional cyclase/O-methyl transferase TcmN (494 aa).

The segment at 11 to 140 (VNAPFELVWD…TTTRANMERI (130 aa)) is polyketide cyclase. The active-site Proton acceptor; for cyclase activity is the S67. Catalysis depends on proton donor; for cyclase activity residues R69 and R82. The interval 169–494 (LLLAASGRLA…TWTTLECRPV (326 aa)) is methyltransferase. Residues D358 and 384 to 386 (GDF) each bind S-adenosyl-L-methionine. The active-site Proton acceptor; for methyltransferase activity is the H405.

The protein in the C-terminal section; belongs to the class I-like SAM-binding methyltransferase superfamily. Cation-independent O-methyltransferase family. In terms of assembly, the tetracenomycin polyketide synthase (TCM PKS) is composed of a ketosynthase complex (TcmKL), an acyl carrier protein (TcmM), a cyclase (TcmN) and a probable second cyclase (TcmJ). TcmN is a homodimer in solution.

It catalyses the reaction 10 malonyl-CoA + 8 H(+) = tetracenomycin F2 + 10 CO2 + 10 CoA + 2 H2O. It functions in the pathway antibiotic biosynthesis; tetracenomycin C biosynthesis. In terms of biological role, involved in the biosynthesis of tetracenomycin C (TCM C). Part of a type II polyketide synthase (PKS) that catalyzes the synthesis of tetracenomycin F2 (TCM F2), a precursor of TCM C, from malonyl-CoA. The TcmN N-terminal domain, when coupled with the other components of the PKS, catalyzes the cyclization and aromatization of the linear polyketide intermediate. Catalyzes the cyclization of the first and second rings. In addition, the C-terminal domain acts as a methyltransferase. It catalyzes the specific O-methylation of tetracenomycin D3 (TCM D3) to TCM B3, using S-adenosyl-L-methionine as the methyl donor. This chain is Tetracenomycin biosynthesis bifunctional cyclase/O-methyl transferase TcmN, found in Streptomyces glaucescens.